A 308-amino-acid polypeptide reads, in one-letter code: UDP-N-acetylenolpyruvoylglucosamine reductase (308 aa).

In terms of domain architecture, FAD-binding PCMH-type spans 32–196; the sequence is VGGPAARLYK…ISAKLQLSPG (165 aa). Arg-176 is an active-site residue. Ser-225 functions as the Proton donor in the catalytic mechanism. The active site involves Glu-296.

The protein belongs to the MurB family. FAD serves as cofactor.

The protein localises to the cytoplasm. The enzyme catalyses UDP-N-acetyl-alpha-D-muramate + NADP(+) = UDP-N-acetyl-3-O-(1-carboxyvinyl)-alpha-D-glucosamine + NADPH + H(+). Its pathway is cell wall biogenesis; peptidoglycan biosynthesis. Its function is as follows. Cell wall formation. This chain is UDP-N-acetylenolpyruvoylglucosamine reductase, found in Legionella pneumophila subsp. pneumophila (strain Philadelphia 1 / ATCC 33152 / DSM 7513).